The sequence spans 95 residues: Large ribosomal subunit protein bL27 (95 aa).

The propeptide occupies 1-9 (MLNMNLQFF).

Belongs to the bacterial ribosomal protein bL27 family. Post-translationally, the N-terminus is cleaved by ribosomal processing cysteine protease Prp.

The protein is Large ribosomal subunit protein bL27 of Agathobacter rectalis (strain ATCC 33656 / DSM 3377 / JCM 17463 / KCTC 5835 / VPI 0990) (Eubacterium rectale).